The following is a 205-amino-acid chain: Probable nicotinate-nucleotide adenylyltransferase (205 aa).

It belongs to the NadD family.

It catalyses the reaction nicotinate beta-D-ribonucleotide + ATP + H(+) = deamido-NAD(+) + diphosphate. It participates in cofactor biosynthesis; NAD(+) biosynthesis; deamido-NAD(+) from nicotinate D-ribonucleotide: step 1/1. Its function is as follows. Catalyzes the reversible adenylation of nicotinate mononucleotide (NaMN) to nicotinic acid adenine dinucleotide (NaAD). This chain is Probable nicotinate-nucleotide adenylyltransferase, found in Arthrobacter sp. (strain FB24).